The following is a 200-amino-acid chain: Recombination protein RecR (200 aa).

The C4-type zinc-finger motif lies at 57-72 (CDSCQNFSDTEICQIC). Residues 80–175 (GTLCVVESPS…LITRLAHGIP (96 aa)) form the Toprim domain.

This sequence belongs to the RecR family.

In terms of biological role, may play a role in DNA repair. It seems to be involved in an RecBC-independent recombinational process of DNA repair. It may act with RecF and RecO. The protein is Recombination protein RecR of Marinobacter nauticus (strain ATCC 700491 / DSM 11845 / VT8) (Marinobacter aquaeolei).